Here is a 311-residue protein sequence, read N- to C-terminus: p-hydroxybenzoic acid efflux pump subunit AaeA (311 aa).

The chain crosses the membrane as a helical span at residues V11–F31.

Belongs to the membrane fusion protein (MFP) (TC 8.A.1) family.

The protein localises to the cell inner membrane. Its function is as follows. Forms an efflux pump with AaeB. The polypeptide is p-hydroxybenzoic acid efflux pump subunit AaeA (Yersinia pseudotuberculosis serotype O:3 (strain YPIII)).